Reading from the N-terminus, the 436-residue chain is Histidine--tRNA ligase (436 aa).

It belongs to the class-II aminoacyl-tRNA synthetase family. Homodimer.

Its subcellular location is the cytoplasm. The enzyme catalyses tRNA(His) + L-histidine + ATP = L-histidyl-tRNA(His) + AMP + diphosphate + H(+). This chain is Histidine--tRNA ligase, found in Psychrobacter sp. (strain PRwf-1).